A 354-amino-acid chain; its full sequence is Protein angel (354 aa).

The tract at residues Val22 to Gly59 is disordered.

This sequence belongs to the CCR4/nocturin family. In terms of tissue distribution, ubiquitously expressed in embryos.

In Drosophila melanogaster (Fruit fly), this protein is Protein angel (angel).